A 32-amino-acid chain; its full sequence is Trypsin inhibitor 2b (32 aa).

Intrachain disulfides connect cysteine 3–cysteine 20, cysteine 10–cysteine 22, and cysteine 16–cysteine 29.

This sequence belongs to the protease inhibitor I7 (squash-type serine protease inhibitor) family.

It localises to the secreted. Inhibits trypsin. This Cucumis sativus (Cucumber) protein is Trypsin inhibitor 2b.